Here is a 313-residue protein sequence, read N- to C-terminus: Cytochrome c biogenesis protein CcsA (313 aa).

Helical transmembrane passes span Ile-9 to Phe-29, Gly-44 to Gly-64, Leu-71 to Phe-91, Gly-111 to Leu-131, Met-143 to Ile-163, Val-217 to Asn-237, Trp-244 to Leu-264, and Ala-278 to Leu-298.

It belongs to the CcmF/CycK/Ccl1/NrfE/CcsA family. May interact with Ccs1.

It is found in the plastid. The protein resides in the chloroplast thylakoid membrane. Required during biogenesis of c-type cytochromes (cytochrome c6 and cytochrome f) at the step of heme attachment. The chain is Cytochrome c biogenesis protein CcsA from Solanum lycopersicum (Tomato).